Reading from the N-terminus, the 695-residue chain is Glycine--tRNA ligase beta subunit (695 aa).

The protein belongs to the class-II aminoacyl-tRNA synthetase family. Tetramer of two alpha and two beta subunits.

The protein localises to the cytoplasm. It carries out the reaction tRNA(Gly) + glycine + ATP = glycyl-tRNA(Gly) + AMP + diphosphate. The chain is Glycine--tRNA ligase beta subunit from Lawsonia intracellularis (strain PHE/MN1-00).